Reading from the N-terminus, the 129-residue chain is uncharacterized protein (129 aa).

Residues 1–13 (MSDVAETVVAQEP) are compositionally biased toward low complexity. Residues 1 to 129 (MSDVAETVVA…SGDAPAVAAE (129 aa)) are disordered. Over residues 34–94 (IDEKTSEQNG…KRVSSAHEEA (61 aa)) the composition is skewed to basic and acidic residues. The span at 117 to 129 (VAASGDAPAVAAE) shows a compositional bias: low complexity.

This is an uncharacterized protein from Caenorhabditis elegans.